Consider the following 476-residue polypeptide: MNFETVIGLEVHVELKTNSKIFSSAPAHFGAEPNTNTTVVDLGMPGVLPVLNKRAVEFGMKAAMAINCEIAKHTKFDRKNYFYPDNPKAYQISQFDKPIGEHGWIEIEVGGKKKKIGITRLHLEEDAGKNTHTSHGYSLVDINRQGTPLIEIVSEPDIRSAEEAYAYLEKLKSIIQYTGVSDVKMEEGSMRCDANISIRPIGQEEFGVKTELKNLNSFNNVRKGIEYEEKRQAEVLKSGGIIEQETRRFEEATGKTSLMRIKEGSDDYRYFPEPDLVDLFIDDAWKERIRAEIPELPDKRQIRYINDLGLPAYDAMVLTLTKEMSDFFEATLAAGADAKQASNWLMGEVSAYLNAEQKELHETGLTPENLAGMIKLIEAGTISSKIAKKVFRELAQNGGDAEQVVKDKGLVQISDEGALRTIISEILDNNEQSIVDFKNGKDRAVGFLVGQVMKATKGQANPPMVNKLLLEEMNKR.

Belongs to the GatB/GatE family. GatB subfamily. As to quaternary structure, heterotrimer of A, B and C subunits.

The catalysed reaction is L-glutamyl-tRNA(Gln) + L-glutamine + ATP + H2O = L-glutaminyl-tRNA(Gln) + L-glutamate + ADP + phosphate + H(+). It catalyses the reaction L-aspartyl-tRNA(Asn) + L-glutamine + ATP + H2O = L-asparaginyl-tRNA(Asn) + L-glutamate + ADP + phosphate + 2 H(+). In terms of biological role, allows the formation of correctly charged Asn-tRNA(Asn) or Gln-tRNA(Gln) through the transamidation of misacylated Asp-tRNA(Asn) or Glu-tRNA(Gln) in organisms which lack either or both of asparaginyl-tRNA or glutaminyl-tRNA synthetases. The reaction takes place in the presence of glutamine and ATP through an activated phospho-Asp-tRNA(Asn) or phospho-Glu-tRNA(Gln). In Listeria monocytogenes serotype 4b (strain CLIP80459), this protein is Aspartyl/glutamyl-tRNA(Asn/Gln) amidotransferase subunit B.